Consider the following 1426-residue polypeptide: Nephrocystin-4 (1426 aa).

At serine 142 the chain carries Phosphoserine. 2 disordered regions span residues 450–536 (GSEE…SPAQ) and 896–935 (RQGK…GRRG). Residues 474–486 (KPPTSPSSPPAPV) show a composition bias toward pro residues. A compositionally biased stretch (polar residues) spans 503–536 (SISQLAASPRSPTQHCLARPTSQLPHGSQASPAQ). Positions 823–1426 (LTLANVGHPC…EAFCVKVIYQ (604 aa)) are sufficient for basal bodies localization.

This sequence belongs to the NPHP4 family. Interacts with NPHP1. Interacts with NPHP1 and RPGRIP1L/NPHP8; NPHP1, NPHP4 and RPGRIP1L are proposed to form a functional NPHP1-4-8 module localized to cell-cell contacts and the ciliary transition zone; NPHP4 mediates the interaction between NPHP1 and RPGRIP1L. Interacts with IQCB1/NPHP5; the interaction likely requires additional interactors. Interacts with RPGRIP1, CEP164, JADE1, PALS1, INADL, PARD6A, INVS, DVL2, LATS1. Interacts with INTU; INTU mediates the interaction between NPHP4 and DAAM1. Interacts with SPATA7. In terms of tissue distribution, expressed in kidney, skeletal muscle, heart and liver, and to a lesser extent in brain and lung.

It is found in the cytoplasm. It localises to the cytoskeleton. Its subcellular location is the cilium basal body. The protein resides in the microtubule organizing center. The protein localises to the centrosome. It is found in the cell junction. It localises to the tight junction. Its subcellular location is the nucleus. Its function is as follows. Involved in the organization of apical junctions; the function is proposed to implicate a NPHP1-4-8 module. Does not seem to be strictly required for ciliogenesis. Required for building functional cilia. Involved in the organization of the subapical actin network in multiciliated epithelial cells. Seems to recruit INT to basal bodies of motile cilia which subsequently interacts with actin-modifying proteins such as DAAM1. In cooperation with INVS may down-regulate the canonical Wnt pathway and promote the Wnt-PCP pathway by regulating expression and subcellular location of disheveled proteins. Stabilizes protein levels of JADE1 and promotes its translocation to the nucleus leading to cooperative inhibition of canonical Wnt signaling. Acts as a negative regulator of the hippo pathway by association with LATS1 and modifying LATS1-dependent phosphorylation and localization of WWTR1/TAZ. The sequence is that of Nephrocystin-4 (NPHP4) from Homo sapiens (Human).